The chain runs to 1020 residues: Tetrathionate reductase subunit A (1020 aa).

The segment at residues 1-33 (MANLTRRQWLKVGLAVGGMVTFGLSYRDVAKRA) is a signal peptide (tat-type signal). One can recognise a 4Fe-4S Mo/W bis-MGD-type domain in the interval 71–154 (QTIAMTQCFG…TLLESLYSPL (84 aa)). 4 residues coordinate [4Fe-4S] cluster: C78, C81, C85, and C140.

The protein belongs to the prokaryotic molybdopterin-containing oxidoreductase family. As to quaternary structure, probably composed of three subunits: TtrA, TtrB and TtrC. Requires [4Fe-4S] cluster as cofactor. Mo-bis(molybdopterin guanine dinucleotide) is required as a cofactor. Post-translationally, predicted to be exported by the Tat system. The position of the signal peptide cleavage has not been experimentally proven.

The protein resides in the periplasm. The protein localises to the cell inner membrane. Part of a membrane-bound tetrathionate reductase that catalyzes the reduction of tetrathionate to thiosulfate. TtrA is the catalytic subunit. During mice infection, the ability to use tetrathionate as an electron acceptor is a growth advantage for S.typhimurium over the competing microbiota in the lumen of the inflamed gut. The protein is Tetrathionate reductase subunit A (ttrA) of Salmonella typhimurium (strain LT2 / SGSC1412 / ATCC 700720).